Here is a 328-residue protein sequence, read N- to C-terminus: GTP 3',8-cyclase (328 aa).

In terms of domain architecture, Radical SAM core spans 1 to 229 (MNQVDYLRIS…ESQVRGAGPA (229 aa)). Arg-8 is a binding site for GTP. Residues Cys-15 and Cys-19 each coordinate [4Fe-4S] cluster. Residue Tyr-21 participates in S-adenosyl-L-methionine binding. Cys-22 contacts [4Fe-4S] cluster. Arg-60 contacts GTP. S-adenosyl-L-methionine is bound at residue Gly-64. Position 91 (Thr-91) interacts with GTP. Position 115 (Ser-115) interacts with S-adenosyl-L-methionine. A GTP-binding site is contributed by Lys-155. Residue Met-189 participates in S-adenosyl-L-methionine binding. The [4Fe-4S] cluster site is built by Cys-252 and Cys-255. 257–259 (RMR) provides a ligand contact to GTP. Cys-269 contributes to the [4Fe-4S] cluster binding site.

It belongs to the radical SAM superfamily. MoaA family. As to quaternary structure, monomer and homodimer. The cofactor is [4Fe-4S] cluster.

It carries out the reaction GTP + AH2 + S-adenosyl-L-methionine = (8S)-3',8-cyclo-7,8-dihydroguanosine 5'-triphosphate + 5'-deoxyadenosine + L-methionine + A + H(+). The protein operates within cofactor biosynthesis; molybdopterin biosynthesis. Catalyzes the cyclization of GTP to (8S)-3',8-cyclo-7,8-dihydroguanosine 5'-triphosphate. This Nostoc punctiforme (strain ATCC 29133 / PCC 73102) protein is GTP 3',8-cyclase.